Consider the following 575-residue polypeptide: MRMSRLFAPTLREIPAEAEVISHQLLLRAGFIRRSSAGVYHYLPLGQRVLQRIMAIVREEMNAAGGQELLMPIIQPAEIWLQSGRWHVYGDELFRLKDRHQRDFCLSPTHEESITDLVKNNVSSYRDLPMLLYHITNKYRDERRPRFGLMRGREFIMKDLYSFDRDEAGLHESYMKMYQAYVNIFRRCGLTFRPVEADPGAIGGTGGSHEFMVLAESGEAEIVYCDACDYAANTEKAECKPQVTPGLPPLPVEQVATPDQKTIEEVCNFLKVAPADTIKTMVFRADDDLVMALIRGDREINEVKLKNLLGCLDLRMATEEECREVSPGGAGFLGPVGIEEIPIYADPEVMAMTRAVAGANAPGAHLIHVCPGRDFTVIATADLRLVQAGEPCPQCGAPLKKARGIEVGQVFKLGTKYSKALNCTFLDEKGQENLMVMGCYGVGVSRTMAAAIEQNHDDNGIVWPMAIAPFQVLVVPVSNKDAAQMEAAEAIYKELIAKGVDTLLDDRPERAGVKFKDADLIGIPVRITVGNKLASDGVVEVKLRRGGEQFTASREDVVAQVQALIREQMEATPVS.

This sequence belongs to the class-II aminoacyl-tRNA synthetase family. ProS type 1 subfamily. As to quaternary structure, homodimer.

It localises to the cytoplasm. It catalyses the reaction tRNA(Pro) + L-proline + ATP = L-prolyl-tRNA(Pro) + AMP + diphosphate. Functionally, catalyzes the attachment of proline to tRNA(Pro) in a two-step reaction: proline is first activated by ATP to form Pro-AMP and then transferred to the acceptor end of tRNA(Pro). As ProRS can inadvertently accommodate and process non-cognate amino acids such as alanine and cysteine, to avoid such errors it has two additional distinct editing activities against alanine. One activity is designated as 'pretransfer' editing and involves the tRNA(Pro)-independent hydrolysis of activated Ala-AMP. The other activity is designated 'posttransfer' editing and involves deacylation of mischarged Ala-tRNA(Pro). The misacylated Cys-tRNA(Pro) is not edited by ProRS. The protein is Proline--tRNA ligase of Heliobacterium modesticaldum (strain ATCC 51547 / Ice1).